A 482-amino-acid polypeptide reads, in one-letter code: Capsule synthesis positive regulator AcpB (482 aa).

PRD domains are found at residues 165-270 (PFEK…YKDI) and 283-395 (EGNL…YTSN).

This sequence belongs to the AtxA/AcpA family.

AcpB and AcpA regulate cap gene expression and capsule synthesis. In Bacillus anthracis, this protein is Capsule synthesis positive regulator AcpB (acpB).